The chain runs to 84 residues: Cytoplasmic envelopment protein 3 (84 aa).

A lipid anchor (N-myristoyl glycine; by host) is attached at G2. The tract at residues 40 to 46 (DLDDLRC) is asp/Glu-rich (acidic).

The protein belongs to the herpesviridae cytoplasmic envelopment protein 3 family. Interacts with cytoplasmic envelopment protein 2; this interaction is essential for the proper localization of each protein to the assembly complex and thus for the production of infectious virus. Myristoylation and palmitoylation (probably on one or more of the nearby cysteines at the N-terminus) enable membrane-binding and Golgi apparatus-specific targeting and are essential for efficient packaging. In terms of processing, phosphorylated. Phosphorylation does not seem to be required for recycling to the host Golgi apparatus. Packaging is selective for underphosphorylated forms.

It is found in the virion tegument. The protein resides in the virion membrane. The protein localises to the host cell membrane. It localises to the host Golgi apparatus membrane. Plays an important role in the cytoplasmic envelopment of tegument proteins and capsids during the assembly and egress processes. Also participates in viral entry at the fusion step probably by regulating the core fusion machinery. This chain is Cytoplasmic envelopment protein 3 (MDV023), found in Gallus gallus (Chicken).